A 215-amino-acid chain; its full sequence is CASP-like protein UU3 (215 aa).

The Cytoplasmic segment spans residues 1–44 (MATAWESEYFDKVTPGERERAVPPMVPQQTPPPVYIQPQVSRNG). The chain crosses the membrane as a helical span at residues 45–65 (IVASIVLRLLTLIFAVVALAV). Topologically, residues 66 to 93 (LASNTGSFQVSTGSATSVKTIKFTILSA) are extracellular. The helical transmembrane segment at 94-114 (FTYLFAVCGVVAVYSLLLIIV) threads the bilayer. The Cytoplasmic segment spans residues 115–128 (EMIDLAVRGFTTHT). Residues 129–149 (LVAIFVFVLDQTMAYVLISAA) traverse the membrane as a helical segment. Topologically, residues 150 to 185 (SASANGVKVSRDESNITGYKFDISCSNLGIDDYCTK) are extracellular. Asn164 carries N-linked (GlcNAc...) asparagine glycosylation. The chain crosses the membrane as a helical span at residues 186–206 (ASASVAIAFIAFLFMAITAGV). Topologically, residues 207–215 (SARRLFKLP) are cytoplasmic.

It belongs to the Casparian strip membrane proteins (CASP) family. In terms of assembly, homodimer and heterodimers.

It is found in the cell membrane. The sequence is that of CASP-like protein UU3 from Physcomitrium patens (Spreading-leaved earth moss).